A 526-amino-acid chain; its full sequence is Delayed-rectifier potassium channel regulatory subunit KCNS1 (526 aa).

Residues methionine 1–leucine 217 lie on the Cytoplasmic side of the membrane. The chain crosses the membrane as a helical span at residues proline 218–isoleucine 239. The Extracellular segment spans residues histidine 240–proline 270. A helical transmembrane segment spans residues valine 271–leucine 293. The Cytoplasmic segment spans residues alanine 294–proline 304. A helical membrane pass occupies residues leucine 305–alanine 322. Over glycine 323–leucine 337 the chain is Extracellular. A helical; Voltage-sensor transmembrane segment spans residues glycine 338 to histidine 358. Residues serine 359–tyrosine 373 lie on the Cytoplasmic side of the membrane. Residues arginine 374 to tyrosine 395 form a helical membrane-spanning segment. The Extracellular segment spans residues threonine 396–isoleucine 408. An intramembrane region (helical) is located at residues proline 409–threonine 420. The Selectivity filter motif lies at threonine 421–aspartate 426. The stretch at threonine 421–valine 428 is an intramembrane region. The Extracellular segment spans residues proline 429 to lysine 435. Residues leucine 436–tyrosine 464 form a helical membrane-spanning segment. At arginine 465–tyrosine 526 the chain is on the cytoplasmic side. The segment at glycine 491–tyrosine 526 is disordered. The span at threonine 499–aspartate 511 shows a compositional bias: basic and acidic residues.

Belongs to the potassium channel family. S (TC 1.A.1.2) subfamily. Kv9.1/KCNS1 sub-subfamily. Heterotetramer with KCNB1. Heterotetramer with KCNB2. Does not form homomultimers.

Its subcellular location is the cell membrane. Potassium channel regulatory subunit that modulate the delayed rectifier voltage-gated potassium channel activity of KCNB1 and KCNB2 by altering their kinetics, expression levels, and shifting the half-inactivation potential to more polarized values. While it does not form functional channels on its own, it can form functional heterotetrameric channels with KCNB1 and KCNB2. Each regulatory subunit has unique regulatory properties that can lead to extensive inhibition, significant changes in kinetics, and/or substantial shifts in the voltage dependencies of the inactivation process. In Pongo abelii (Sumatran orangutan), this protein is Delayed-rectifier potassium channel regulatory subunit KCNS1.